A 263-amino-acid polypeptide reads, in one-letter code: Chromosomal replication initiator protein DnaA (263 aa).

Position 1 (Glu1) is a region of interest, domain I, interacts with DnaA modulators. Glu1 is a region of interest (domain II). The segment at 1-179 is domain III, AAA+ region; sequence ESGMGKTHLL…GSVSRLNFWS (179 aa). Residues Gly3, Gly5, Lys6, and Thr7 each contribute to the ATP site. Residues 180 to 263 are domain IV, binds dsDNA; the sequence is QQNPEEKIIT…HTLAQIGEEF (84 aa).

It belongs to the DnaA family. Oligomerizes as a right-handed, spiral filament on DNA at oriC.

The protein localises to the cytoplasm. Its function is as follows. Plays an essential role in the initiation and regulation of chromosomal replication. ATP-DnaA binds to the origin of replication (oriC) to initiate formation of the DNA replication initiation complex once per cell cycle. Binds the DnaA box (a 9 base pair repeat at the origin) and separates the double-stranded (ds)DNA. Forms a right-handed helical filament on oriC DNA; dsDNA binds to the exterior of the filament while single-stranded (ss)DNA is stabiized in the filament's interior. The ATP-DnaA-oriC complex binds and stabilizes one strand of the AT-rich DNA unwinding element (DUE), permitting loading of DNA polymerase. After initiation quickly degrades to an ADP-DnaA complex that is not apt for DNA replication. Binds acidic phospholipids. This chain is Chromosomal replication initiator protein DnaA, found in Mycoplasma mycoides.